An 803-amino-acid chain; its full sequence is Homeobox protein Wariai (803 aa).

Residues 23-41 (SDYDSYEQQYNNPTGSKQY) show a composition bias toward polar residues. The disordered stretch occupies residues 23–144 (SDYDSYEQQY…PTPYSSNSFS (122 aa)). Over residues 42–124 (NNNNNNNTNT…NNNNNNNNNN (83 aa)) the composition is skewed to low complexity. A compositionally biased stretch (polar residues) spans 125-138 (QHLSQSQQLSPTPY). The segment at residues 162-221 (SKKKRKRTSPDQLKLLEKIFMAHQHPNLNLRSQLAVELHMTARSVQIWFQNRRAKARNME) is a DNA-binding region (homeobox). The interval 288–330 (INGNMGGGGGGGGGSHNHHHHNHNHNHHNHNHNHNHNQPLSNG) is disordered. Positions 291–302 (NMGGGGGGGGGS) are enriched in gly residues. The segment covering 303–322 (HNHHHHNHNHNHHNHNHNHN) has biased composition (basic residues). ANK repeat units lie at residues 374 to 403 (KGLS…NPNI), 407 to 436 (QGNT…DPNL), 440 to 469 (EGVS…EVSV), 474 to 503 (NGET…KASV), 507 to 536 (NNRT…DMNA), 540 to 569 (DGHT…DPNI), 573 to 602 (EGYT…KLNI), 606 to 636 (NGQN…EIAA), and 642 to 671 (QGYT…SKKI). The disordered stretch occupies residues 695–760 (KSSNNNNSNS…PPGNKFEEDD (66 aa)). Over residues 696-746 (SSNNNNSNSNINNINNINNINNINSQPNTNSDNNNNNNNNNFNENYSNGNN) the composition is skewed to low complexity.

The protein resides in the nucleus. Functionally, putative transcription factor, that seems to be involved in anterior-posterior patterning of the slug, probably by controlling the proportions of prestalk and prespore cells. In Dictyostelium discoideum (Social amoeba), this protein is Homeobox protein Wariai (warA).